The chain runs to 565 residues: Periplasmic trehalase (565 aa).

An N-terminal signal peptide occupies residues 1–30 (MKSPAPSRPQKMALIPACIFLCFAALSVQA). Residues Arg-152, 159 to 160 (WD), Asn-196, 205 to 207 (RSQ), 277 to 279 (RPE), and Gly-310 each bind substrate. Catalysis depends on proton donor/acceptor residues Asp-312 and Glu-496. Position 511 (Glu-511) interacts with substrate. The tract at residues 539 to 565 (CDNVPATRPLSESTTQPLKQKEAEPTP) is disordered.

Belongs to the glycosyl hydrolase 37 family. As to quaternary structure, monomer.

It is found in the periplasm. The catalysed reaction is alpha,alpha-trehalose + H2O = alpha-D-glucose + beta-D-glucose. Functionally, provides the cells with the ability to utilize trehalose at high osmolarity by splitting it into glucose molecules that can subsequently be taken up by the phosphotransferase-mediated uptake system. The polypeptide is Periplasmic trehalase (Escherichia coli O1:K1 / APEC).